Here is a 417-residue protein sequence, read N- to C-terminus: 4-hydroxy-3-methylbut-2-en-1-yl diphosphate synthase (flavodoxin) (417 aa).

[4Fe-4S] cluster is bound by residues Cys-305, Cys-308, Cys-351, and Glu-358.

This sequence belongs to the IspG family. It depends on [4Fe-4S] cluster as a cofactor.

The catalysed reaction is (2E)-4-hydroxy-3-methylbut-2-enyl diphosphate + oxidized [flavodoxin] + H2O + 2 H(+) = 2-C-methyl-D-erythritol 2,4-cyclic diphosphate + reduced [flavodoxin]. It functions in the pathway isoprenoid biosynthesis; isopentenyl diphosphate biosynthesis via DXP pathway; isopentenyl diphosphate from 1-deoxy-D-xylulose 5-phosphate: step 5/6. Its function is as follows. Converts 2C-methyl-D-erythritol 2,4-cyclodiphosphate (ME-2,4cPP) into 1-hydroxy-2-methyl-2-(E)-butenyl 4-diphosphate. This Nitrosomonas europaea (strain ATCC 19718 / CIP 103999 / KCTC 2705 / NBRC 14298) protein is 4-hydroxy-3-methylbut-2-en-1-yl diphosphate synthase (flavodoxin).